A 258-amino-acid polypeptide reads, in one-letter code: Acyl-[acyl-carrier-protein]--UDP-N-acetylglucosamine O-acyltransferase (258 aa).

This sequence belongs to the transferase hexapeptide repeat family. LpxA subfamily. Homotrimer.

It localises to the cytoplasm. It catalyses the reaction a (3R)-hydroxyacyl-[ACP] + UDP-N-acetyl-alpha-D-glucosamine = a UDP-3-O-[(3R)-3-hydroxyacyl]-N-acetyl-alpha-D-glucosamine + holo-[ACP]. It functions in the pathway glycolipid biosynthesis; lipid IV(A) biosynthesis; lipid IV(A) from (3R)-3-hydroxytetradecanoyl-[acyl-carrier-protein] and UDP-N-acetyl-alpha-D-glucosamine: step 1/6. Involved in the biosynthesis of lipid A, a phosphorylated glycolipid that anchors the lipopolysaccharide to the outer membrane of the cell. The sequence is that of Acyl-[acyl-carrier-protein]--UDP-N-acetylglucosamine O-acyltransferase from Thermodesulfovibrio yellowstonii (strain ATCC 51303 / DSM 11347 / YP87).